We begin with the raw amino-acid sequence, 97 residues long: uncharacterized protein (97 aa).

This is an uncharacterized protein from Archaeoglobus fulgidus (strain ATCC 49558 / DSM 4304 / JCM 9628 / NBRC 100126 / VC-16).